We begin with the raw amino-acid sequence, 189 residues long: Large ribosomal subunit protein eL18 (189 aa).

Belongs to the eukaryotic ribosomal protein eL18 family.

Its subcellular location is the cytoplasm. The polypeptide is Large ribosomal subunit protein eL18 (RpL18) (Drosophila pseudoobscura pseudoobscura (Fruit fly)).